The following is a 1247-amino-acid chain: Structural polyprotein (1247 aa).

The interval 36 to 67 (RPAGQLAQLISAVSRLALRTVPQKPRRTRKIK) is host transcription inhibition. A disordered region spans residues 53–103 (LRTVPQKPRRTRKIKKQKQVKQEQQSTRNQKKKAPKQKQTQKKKRPGRRER). 2 stretches are compositionally biased toward basic residues: residues 59–71 (KPRR…KQKQ) and 81–100 (NQKK…RPGR). The short motif at 60 to 98 (PRRTRKIKKQKQVKQEQQSTRNQKKKAPKQKQTQKKKRP) is the Nuclear localization signal element. Positions 83–113 (KKKAPKQKQTQKKKRPGRRERMCMKIENDCI) are binding to the viral RNA. A ribosome-binding region spans residues 98-112 (PGRRERMCMKIENDC). A disulfide bridge links Cys-112 with Cys-127. The Peptidase S3 domain maps to 112-260 (CIFEVKHEGK…KITPEGSVEW (149 aa)). His-138 functions as the Charge relay system in the catalytic mechanism. Residues 143–153 (IDNADLAKLAF) carry the Nuclear export signal motif. The tract at residues 154–159 (KRSSKY) is interaction with spike glycoprotein E2. Asp-160 (charge relay system) is an active-site residue. The segment at 182–192 (PEGYYNWHHGA) is dimerization of the capsid protein. Ser-212 functions as the Charge relay system in the catalytic mechanism. The dimerization of the capsid protein stretch occupies residues 218-222 (DNKGR). Residues 261–273 (SLALPVMCLLANT) form a functions as an uncleaved signal peptide for the precursor of protein E3/E2 region. Disulfide bonds link Cys-268-Cys-277, Cys-282-Cys-286, Cys-285-Cys-317, Cys-343-Cys-449, Cys-346-Cys-352, Cys-415-Cys-429, Cys-477-Cys-590, Cys-525-Cys-549, and Cys-527-Cys-544. N-linked (GlcNAc...) asparagine; by host glycosylation is present at Asn-272. Residues 325 to 691 (NARENFNVYK…YYYELYPTTT (367 aa)) are Extracellular-facing. An N-linked (GlcNAc...) asparagine; by host glycan is attached at Asn-587. The chain crosses the membrane as a helical span at residues 692 to 712 (IAVLAAASIVVASLVGLSLGM). At 713–747 (CICARRRCITPYELTPGATIPFLLGILCCVKTAKA) the chain is on the cytoplasmic side. The segment at 715 to 719 (CARRR) is interaction with the capsid protein. Residues Cys-720, Cys-740, and Cys-741 are each lipidated (S-palmitoyl cysteine; by host). Positions 720-740 (CITPYELTPGATIPFLLGILC) are transient transmembrane before p62-6K protein processing. A disulfide bridge links Cys-720 with Cys-741. The Extracellular segment spans residues 748-762 (ASYYEAATYLWNEQQ). The chain crosses the membrane as a helical span at residues 763 to 783 (PLFWLQLLIPLSAAIVVCNCL). Topologically, residues 784–787 (KLLP) are cytoplasmic. The helical transmembrane segment at 788 to 808 (CCCKTLTFLAVMSIGARTVSA) threads the bilayer. The Extracellular portion of the chain corresponds to 809–1223 (YEHATVIPNT…AMSWVQKITG (415 aa)). 4 disulfide bridges follow: Cys-857/Cys-922, Cys-870/Cys-902, Cys-871/Cys-904, and Cys-876/Cys-886. Positions 892-909 (VYPFMWGGAYCFCDAENT) are E1 fusion peptide loop. N-linked (GlcNAc...) asparagine; by host glycans are attached at residues Asn-949 and Asn-1078. Intrachain disulfides connect Cys-1067–Cys-1079, Cys-1109–Cys-1184, Cys-1114–Cys-1188, and Cys-1136–Cys-1178. The chain crosses the membrane as a helical span at residues 1224–1244 (GVGLVVAIAALILIIVLCVSF). Residue Cys-1241 is the site of S-palmitoyl cysteine; by host attachment. Residues 1245–1247 (SRH) are Cytoplasmic-facing.

In terms of assembly, homodimer. Homomultimer. Interacts with host karyopherin KPNA4; this interaction allows the nuclear import of the viral capsid protein. Interacts with spike glycoprotein E2. Interacts with host IRAK1; the interaction leads to inhibition of IRAK1-dependent signaling. The precursor of protein E3/E2 and E1 form a heterodimer shortly after synthesis. As to quaternary structure, the precursor of protein E3/E2 and E1 form a heterodimer shortly after synthesis. Processing of the precursor of protein E3/E2 into E2 and E3 results in a heterodimer of the spike glycoproteins E2 and E1. Spike at virion surface are constituted of three E2-E1 heterodimers. After target cell attachment and endocytosis, E1 change conformation to form homotrimers. Interacts with 6K protein. In terms of assembly, interacts with spike glycoprotein E1. Processing of the precursor of protein E3/E2 into E2 and E3 results in a heterodimer of the spike glycoproteins E2 and E1. Spike at virion surface are constituted of a trimer of E2-E1 heterodimers. Interacts with 6K protein. Interacts with host MXRA8; this interaction mediates virus entry. Oligomer. Interacts with spike glycoprotein E1. Interacts with spike glycoprotein E2. Structural polyprotein: Specific enzymatic cleavages in vivo yield mature proteins. Capsid protein is auto-cleaved during polyprotein translation, unmasking a signal peptide at the N-terminus of the precursor of E3/E2. The remaining polyprotein is then targeted to the host endoplasmic reticulum, where host signal peptidase cleaves it into pE2, 6K and E1 proteins. pE2 is further processed to mature E3 and E2 by host furin in trans-Golgi vesicle. In terms of processing, palmitoylated via thioester bonds. These palmitoylations may induce disruption of the C-terminus transmembrane. This would result in the reorientation of E2 C-terminus from lumenal to cytoplasmic side. Post-translationally, N-glycosylated. Palmitoylated via thioester bonds.

Its subcellular location is the virion. It is found in the host cytoplasm. The protein localises to the host cell membrane. It localises to the host nucleus. The protein resides in the virion membrane. Its subcellular location is the host Golgi apparatus. It is found in the host trans-Golgi network. The protein localises to the host endoplasmic reticulum. The catalysed reaction is Autocatalytic release of the core protein from the N-terminus of the togavirus structural polyprotein by hydrolysis of a -Trp-|-Ser- bond.. Its function is as follows. Forms an icosahedral capsid with a T=4 symmetry composed of 240 copies of the capsid protein surrounded by a lipid membrane through which penetrate 80 spikes composed of trimers of E1-E2 heterodimers. The capsid protein binds to the viral RNA genome at a site adjacent to a ribosome binding site for viral genome translation following genome release. Possesses a protease activity that results in its autocatalytic cleavage from the nascent structural protein. Following its self-cleavage, the capsid protein transiently associates with ribosomes, and within several minutes the protein binds to viral RNA and rapidly assembles into icosahedric core particles. The resulting nucleocapsid eventually associates with the cytoplasmic domain of the spike glycoprotein E2 at the cell membrane, leading to budding and formation of mature virions. In case of infection, new virions attach to target cells and after clathrin-mediated endocytosis their membrane fuses with the host endosomal membrane. This leads to the release of the nucleocapsid into the cytoplasm, followed by an uncoating event necessary for the genomic RNA to become accessible. The uncoating might be triggered by the interaction of capsid proteins with ribosomes. Binding of ribosomes would release the genomic RNA since the same region is genomic RNA-binding and ribosome-binding. Specifically inhibits interleukin-1 receptor-associated kinase 1/IRAK1-dependent signaling during viral entry, representing a means by which the alphaviruses may evade innate immune detection and activation prior to viral gene expression. In terms of biological role, provides the signal sequence for the translocation of the precursor of protein E3/E2 to the host endoplasmic reticulum. Furin-cleaved E3 remains associated with spike glycoprotein E1 and mediates pH protection of the latter during the transport via the secretory pathway. After virion release from the host cell, the assembly protein E3 is gradually released in the extracellular space. Plays a role in viral attachment to target host cell, by binding to the cell receptor MXRA8. Synthesized as a p62 precursor which is processed by furin at the cell membrane just before virion budding, giving rise to E2-E1 heterodimer. The p62-E1 heterodimer is stable, whereas E2-E1 is unstable and dissociate at low pH. p62 is processed at the last step, presumably to avoid E1 fusion activation before its final export to cell surface. E2 C-terminus contains a transitory transmembrane that would be disrupted by palmitoylation, resulting in reorientation of the C-terminal tail from lumenal to cytoplasmic side. This step is critical since E2 C-terminus is involved in budding by interacting with capsid proteins. This release of E2 C-terminus in cytoplasm occurs lately in protein export, and precludes premature assembly of particles at the endoplasmic reticulum membrane. Functionally, acts as a viroporin that participates in virus glycoprotein processing and transport to the plasma membrane, cell permeabilization and budding of viral particles. Disrupts the calcium homeostasis of the cell, probably at the endoplasmic reticulum level. This leads to cytoplasmic calcium elevation. Because of its lipophilic properties, the 6K protein is postulated to influence the selection of lipids that interact with the transmembrane domains of the glycoproteins, which, in turn, affects the deformability of the bilayer required for the extreme curvature that occurs as budding proceeds. Present in low amount in virions, about 3% compared to viral glycoproteins. Its function is as follows. Class II viral fusion protein. Fusion activity is inactive as long as E1 is bound to E2 in mature virion. After virus attachment to target cell via host MXRA8 and endocytosis, acidification of the endosome induce dissociation of E1/E2 heterodimer and concomitant trimerization of the E1 subunits. This E1 trimer is fusion active, and promotes release of viral nucleocapsid in cytoplasm after endosome and viral membrane fusion. Efficient fusion requires the presence of cholesterol and sphingolipid in the target membrane. The protein is Structural polyprotein of Anopheles (Human).